The following is a 76-amino-acid chain: Omega-agatoxin-Aa3a (76 aa).

6 cysteine pairs are disulfide-bonded: C2-C19, C9-C25, C16-C52, C18-C40, C27-C38, and C59-C67.

This sequence belongs to the neurotoxin 04 (omega-agtx) family. 03 (type II/III omega-agtx) subfamily. Expressed by the venom gland.

The protein resides in the secreted. Its function is as follows. Omega-agatoxin are antagonist of voltage-gated calcium channels. They block insect neuromuscular transmission presynaptically. Potent blocker of N- (Cav2.2/CACNA1B) and L-type (Cav1/CACNA1) calcium channels. This is Omega-agatoxin-Aa3a from Agelenopsis aperta (North American funnel-web spider).